The sequence spans 119 residues: Protein YdaY (119 aa).

The protein is Protein YdaY (ydaY) of Escherichia coli (strain K12).